Consider the following 291-residue polypeptide: MPSLKDLKNRIASVKATQKITKAMKMVAAAKLRRAQEAAEAARPYSQRMAAVLSNIAQAVGADDSAPRLMTGTGKDDTHLLVVCTAERGLCGGFNSQIARHARDHVRKLLAQGKTVKIICVGKKGFDILRREFASLIIDRVDLREVKKIGFENADRIGHKVIELFDNGEFDVCTLFYSEFKSVISQIPTAQQLIPASAGEAVAEGASAIYEYEPDAAAILSDLIPRNISVQIFRALLENVAGEMGAKMSAMDNATRNAGEMINKLTLNYNRQRQAQITKELIEIISGAEAL.

This sequence belongs to the ATPase gamma chain family. As to quaternary structure, F-type ATPases have 2 components, CF(1) - the catalytic core - and CF(0) - the membrane proton channel. CF(1) has five subunits: alpha(3), beta(3), gamma(1), delta(1), epsilon(1). CF(0) has three main subunits: a, b and c.

It localises to the cell inner membrane. Produces ATP from ADP in the presence of a proton gradient across the membrane. The gamma chain is believed to be important in regulating ATPase activity and the flow of protons through the CF(0) complex. The protein is ATP synthase gamma chain of Sinorhizobium medicae (strain WSM419) (Ensifer medicae).